Here is a 224-residue protein sequence, read N- to C-terminus: Ribose-5-phosphate isomerase A 1 (224 aa).

Substrate is bound by residues Ser-29–Thr-32, Asp-85–Asp-88, and Lys-98–Gly-101. Glu-107 serves as the catalytic Proton acceptor. Residue Lys-125 coordinates substrate.

Belongs to the ribose 5-phosphate isomerase family. In terms of assembly, homodimer.

The enzyme catalyses aldehydo-D-ribose 5-phosphate = D-ribulose 5-phosphate. It participates in carbohydrate degradation; pentose phosphate pathway; D-ribose 5-phosphate from D-ribulose 5-phosphate (non-oxidative stage): step 1/1. In terms of biological role, catalyzes the reversible conversion of ribose-5-phosphate to ribulose 5-phosphate. The protein is Ribose-5-phosphate isomerase A 1 of Oceanobacillus iheyensis (strain DSM 14371 / CIP 107618 / JCM 11309 / KCTC 3954 / HTE831).